A 291-amino-acid chain; its full sequence is Bifunctional protein FolD (291 aa).

NADP(+) contacts are provided by residues 166–168 (GAG), Ile-191, and Ile-232.

Belongs to the tetrahydrofolate dehydrogenase/cyclohydrolase family. In terms of assembly, homodimer.

The catalysed reaction is (6R)-5,10-methylene-5,6,7,8-tetrahydrofolate + NADP(+) = (6R)-5,10-methenyltetrahydrofolate + NADPH. The enzyme catalyses (6R)-5,10-methenyltetrahydrofolate + H2O = (6R)-10-formyltetrahydrofolate + H(+). It functions in the pathway one-carbon metabolism; tetrahydrofolate interconversion. In terms of biological role, catalyzes the oxidation of 5,10-methylenetetrahydrofolate to 5,10-methenyltetrahydrofolate and then the hydrolysis of 5,10-methenyltetrahydrofolate to 10-formyltetrahydrofolate. The protein is Bifunctional protein FolD of Aquifex aeolicus (strain VF5).